Consider the following 363-residue polypeptide: LIM and cysteine-rich domains protein 1 (363 aa).

Ser16 carries the post-translational modification Phosphoserine. The PET domain maps to 99–206 (MIMTNPIATG…GEVALPGQGG (108 aa)). Residues 200 to 233 (ALPGQGGLPKEEGKQQEKPEGAETAAPTANGSLG) form a disordered region. Over residues 208–220 (PKEEGKQQEKPEG) the composition is skewed to basic and acidic residues. 2 consecutive LIM zinc-binding domains span residues 239–304 (YVCE…SLRP) and 305–363 (RCSG…SKRT).

As to quaternary structure, interacts with beta-dystroglycan. Interacts with GATA1, GATA4 and GATA6. Highly expressed in both skeletal muscle and cardiac muscle.

The protein localises to the cytoplasm. It is found in the nucleus. Functionally, transcriptional cofactor that restricts GATA6 function by inhibiting DNA-binding, resulting in repression of GATA6 transcriptional activation of downstream target genes. Represses GATA6-mediated trans activation of lung- and cardiac tissue-specific promoters. Inhibits DNA-binding by GATA4 and GATA1 to the cTNC promoter. Plays a critical role in the development of cardiac hypertrophy via activation of calcineurin/nuclear factor of activated T-cells signaling pathway. In Sus scrofa (Pig), this protein is LIM and cysteine-rich domains protein 1 (LMCD1).